An 897-amino-acid polypeptide reads, in one-letter code: DNA mismatch repair protein MutS (897 aa).

654-661 provides a ligand contact to ATP; that stretch reads GPNMAGKS.

This sequence belongs to the DNA mismatch repair MutS family.

In terms of biological role, this protein is involved in the repair of mismatches in DNA. It is possible that it carries out the mismatch recognition step. This protein has a weak ATPase activity. In Maricaulis maris (strain MCS10) (Caulobacter maris), this protein is DNA mismatch repair protein MutS.